The sequence spans 144 residues: Eukaryotic translation initiation factor 1A, Y-chromosomal (144 aa).

A compositionally biased stretch (basic residues) spans 1–15 (MPKNKGKGGKNRRRG). A disordered region spans residues 1 to 26 (MPKNKGKGGKNRRRGKNENESEKREL). A compositionally biased stretch (basic and acidic residues) spans 16 to 26 (KNENESEKREL). An S1-like domain is found at 22–96 (EKRELVFKED…NKADVILKYN (75 aa)). Lys88 is covalently cross-linked (Glycyl lysine isopeptide (Lys-Gly) (interchain with G-Cter in ubiquitin)). The tract at residues 114-144 (KINETDTFGPGDDDEIQFDDIGDDDEDIDDI) is disordered. Acidic residues predominate over residues 124–144 (GDDDEIQFDDIGDDDEDIDDI).

It belongs to the eIF-1A family. In terms of assembly, component of the 43S pre-initiation complex (43S PIC), which is composed of the 40S ribosomal subunit, EIF1, eIF1A (EIF1AX), eIF3 complex, EIF5 and eIF2-GTP-initiator tRNA complex (eIF2 ternary complex). Interacts with EIF5; this interaction contributes to the maintenance of EIF1 within the open 43S PIC. Interacts through its C-terminal domain (CTD) with the CTD of EIF5B; from the location of the start codon by the 43S complex until the formation of the 80S complex. In terms of tissue distribution, ubiquitous.

It is found in the cytoplasm. Functionally, component of the 43S pre-initiation complex (43S PIC), which binds to the mRNA cap-proximal region, scans mRNA 5'-untranslated region, and locates the initiation codon. This protein enhances formation of the cap-proximal complex. Together with EIF1, facilitates scanning, start codon recognition, promotion of the assembly of 48S complex at the initiation codon (43S PIC becomes 48S PIC after the start codon is reached), and dissociation of aberrant complexes. After start codon location, together with EIF5B orients the initiator methionine-tRNA in a conformation that allows 60S ribosomal subunit joining to form the 80S initiation complex. Is released after 80S initiation complex formation, just after GTP hydrolysis by EIF5B, and before release of EIF5B. Its globular part is located in the A site of the 40S ribosomal subunit. Its interaction with EIF5 during scanning contribute to the maintenance of EIF1 within the open 43S PIC. In contrast to yeast orthologs, does not bind EIF1. The protein is Eukaryotic translation initiation factor 1A, Y-chromosomal (EIF1AY) of Homo sapiens (Human).